A 294-amino-acid polypeptide reads, in one-letter code: N-acetylmuramic acid 6-phosphate etherase (294 aa).

Residues Val54–Lys217 form the SIS domain. Catalysis depends on Glu82, which acts as the Proton donor. Glu113 is a catalytic residue.

The protein belongs to the GCKR-like family. MurNAc-6-P etherase subfamily. In terms of assembly, homodimer.

It carries out the reaction N-acetyl-D-muramate 6-phosphate + H2O = N-acetyl-D-glucosamine 6-phosphate + (R)-lactate. Its pathway is amino-sugar metabolism; N-acetylmuramate degradation. Functionally, specifically catalyzes the cleavage of the D-lactyl ether substituent of MurNAc 6-phosphate, producing GlcNAc 6-phosphate and D-lactate. This chain is N-acetylmuramic acid 6-phosphate etherase, found in Bacillus mycoides (strain KBAB4) (Bacillus weihenstephanensis).